The chain runs to 108 residues: Translation initiation factor 1A (108 aa).

The 75-residue stretch at 11–85 folds into the S1-like domain; that stretch reads PSRDVPRPEE…NRCDILYKYG (75 aa).

The protein belongs to the eIF-1A family.

In terms of biological role, seems to be required for maximal rate of protein biosynthesis. Enhances ribosome dissociation into subunits and stabilizes the binding of the initiator Met-tRNA(I) to 40 S ribosomal subunits. The sequence is that of Translation initiation factor 1A (eIF1A) from Saccharolobus solfataricus (strain ATCC 35092 / DSM 1617 / JCM 11322 / P2) (Sulfolobus solfataricus).